A 224-amino-acid chain; its full sequence is 7-cyano-7-deazaguanine synthase (224 aa).

ATP is bound at residue 8–18 (LSGGMDSAAVI). Zn(2+) is bound by residues C186, C196, C199, and C202.

This sequence belongs to the QueC family. Requires Zn(2+) as cofactor.

It catalyses the reaction 7-carboxy-7-deazaguanine + NH4(+) + ATP = 7-cyano-7-deazaguanine + ADP + phosphate + H2O + H(+). Its pathway is purine metabolism; 7-cyano-7-deazaguanine biosynthesis. Functionally, catalyzes the ATP-dependent conversion of 7-carboxy-7-deazaguanine (CDG) to 7-cyano-7-deazaguanine (preQ(0)). The protein is 7-cyano-7-deazaguanine synthase of Xanthomonas campestris pv. campestris (strain 8004).